The sequence spans 168 residues: Phosphopantetheine adenylyltransferase (168 aa).

A substrate-binding site is contributed by serine 9. Residues 9–10 (SF) and histidine 17 contribute to the ATP site. Substrate is bound by residues lysine 41, leucine 73, and arginine 87. ATP is bound by residues 88–90 (GMR), glutamate 98, and 123–129 (WIYTSSS).

Belongs to the bacterial CoaD family. As to quaternary structure, homohexamer. It depends on Mg(2+) as a cofactor.

The protein localises to the cytoplasm. The catalysed reaction is (R)-4'-phosphopantetheine + ATP + H(+) = 3'-dephospho-CoA + diphosphate. It functions in the pathway cofactor biosynthesis; coenzyme A biosynthesis; CoA from (R)-pantothenate: step 4/5. In terms of biological role, reversibly transfers an adenylyl group from ATP to 4'-phosphopantetheine, yielding dephospho-CoA (dPCoA) and pyrophosphate. The sequence is that of Phosphopantetheine adenylyltransferase from Desulfosudis oleivorans (strain DSM 6200 / JCM 39069 / Hxd3) (Desulfococcus oleovorans).